The chain runs to 204 residues: CDP-archaeol synthase (204 aa).

The next 6 membrane-spanning stretches (helical) occupy residues 5–25 (VYAC…YVIL), 43–63 (MLWV…SRLV), 91–111 (FEGF…LAYA), 116–136 (GVSA…GAFV), 147–167 (PAIL…QGLF), and 175–195 (VVVA…MAAF).

It belongs to the CDP-archaeol synthase family. Mg(2+) serves as cofactor.

The protein localises to the cell membrane. The catalysed reaction is 2,3-bis-O-(geranylgeranyl)-sn-glycerol 1-phosphate + CTP + H(+) = CDP-2,3-bis-O-(geranylgeranyl)-sn-glycerol + diphosphate. It participates in membrane lipid metabolism; glycerophospholipid metabolism. Catalyzes the formation of CDP-2,3-bis-(O-geranylgeranyl)-sn-glycerol (CDP-archaeol) from 2,3-bis-(O-geranylgeranyl)-sn-glycerol 1-phosphate (DGGGP) and CTP. This reaction is the third ether-bond-formation step in the biosynthesis of archaeal membrane lipids. In Thermofilum pendens (strain DSM 2475 / Hrk 5), this protein is CDP-archaeol synthase.